The following is a 274-amino-acid chain: Diaminopimelate epimerase (274 aa).

Substrate is bound by residues asparagine 11 and asparagine 62. The Proton donor role is filled by cysteine 71. Residues 72-73 (GN), asparagine 157, asparagine 190, and 208-209 (ER) contribute to the substrate site. Cysteine 217 functions as the Proton acceptor in the catalytic mechanism. 218–219 (GT) serves as a coordination point for substrate.

The protein belongs to the diaminopimelate epimerase family. As to quaternary structure, homodimer.

It is found in the cytoplasm. It catalyses the reaction (2S,6S)-2,6-diaminopimelate = meso-2,6-diaminopimelate. It functions in the pathway amino-acid biosynthesis; L-lysine biosynthesis via DAP pathway; DL-2,6-diaminopimelate from LL-2,6-diaminopimelate: step 1/1. Functionally, catalyzes the stereoinversion of LL-2,6-diaminopimelate (L,L-DAP) to meso-diaminopimelate (meso-DAP), a precursor of L-lysine and an essential component of the bacterial peptidoglycan. The protein is Diaminopimelate epimerase of Elusimicrobium minutum (strain Pei191).